The following is a 508-amino-acid chain: GMP synthase [glutamine-hydrolyzing] (508 aa).

The 189-residue stretch at Met-1–Thr-189 folds into the Glutamine amidotransferase type-1 domain. Cys-78 serves as the catalytic Nucleophile. Catalysis depends on residues His-163 and Glu-165. The GMPS ATP-PPase domain occupies Trp-190–Arg-383. Ser-217–Thr-223 is an ATP binding site.

Homodimer.

The enzyme catalyses XMP + L-glutamine + ATP + H2O = GMP + L-glutamate + AMP + diphosphate + 2 H(+). The protein operates within purine metabolism; GMP biosynthesis; GMP from XMP (L-Gln route): step 1/1. Its function is as follows. Catalyzes the synthesis of GMP from XMP. This Helicobacter pylori (strain J99 / ATCC 700824) (Campylobacter pylori J99) protein is GMP synthase [glutamine-hydrolyzing] (guaA).